Reading from the N-terminus, the 376-residue chain is Cytochrome-c peroxidase IdrP1 (376 aa).

A signal peptide spans 1-24; it reads MGHIRSIRLALAVAAVCTAASAAA. Cytochrome c domains follow at residues 49–157 and 203–354; these read DKVA…AAFK and AEAQ…EALS. Heme c-binding residues include cysteine 71, cysteine 74, histidine 75, cysteine 218, cysteine 221, and histidine 222.

As to quaternary structure, the iodate reductase (Idr) complex is composed of a molybdopterin-dependent iodate reductase (IdrA and IdrB subunits) and two associated peroxidases (IdrP1 and IdrP2). Requires heme c as cofactor.

The protein resides in the periplasm. The catalysed reaction is 2 Fe(II)-[cytochrome c] + H2O2 + 2 H(+) = 2 Fe(III)-[cytochrome c] + 2 H2O. Functionally, involved in iodate respiration. May play a critical role in detoxification of inadvertent H(2)O(2) generated by the iodate reductase IdrA/IdrB. In Denitromonas iodatirespirans, this protein is Cytochrome-c peroxidase IdrP1.